A 363-amino-acid polypeptide reads, in one-letter code: Branched-chain-amino-acid aminotransferase 2 (363 aa).

Lys197 carries the N6-(pyridoxal phosphate)lysine modification.

The protein belongs to the class-IV pyridoxal-phosphate-dependent aminotransferase family. Pyridoxal 5'-phosphate is required as a cofactor.

It carries out the reaction L-leucine + 2-oxoglutarate = 4-methyl-2-oxopentanoate + L-glutamate. The enzyme catalyses L-isoleucine + 2-oxoglutarate = (S)-3-methyl-2-oxopentanoate + L-glutamate. It catalyses the reaction L-valine + 2-oxoglutarate = 3-methyl-2-oxobutanoate + L-glutamate. Its pathway is amino-acid biosynthesis; L-isoleucine biosynthesis; L-isoleucine from 2-oxobutanoate: step 4/4. It functions in the pathway amino-acid biosynthesis; L-leucine biosynthesis; L-leucine from 3-methyl-2-oxobutanoate: step 4/4. The protein operates within amino-acid biosynthesis; L-valine biosynthesis; L-valine from pyruvate: step 4/4. With respect to regulation, inhibited by canaline. Its function is as follows. Transaminates branched-chain amino acids and ketoglutarate. This is Branched-chain-amino-acid aminotransferase 2 (ilvK) from Bacillus subtilis (strain 168).